The chain runs to 292 residues: MKHLIDKANTLMEALPYIRRFSGRTFVIKYGGHAMSDERLKESFALDVIMLKSLGINAVIVHGGGPQINETLKRYGIVSEFVRGMRVTDGETMSVVEMVLVGQVNKEVVGYLNQHGGKAVGLCGKDGSLLLSKKLLQEVTGEDGAIEQIDIGYVGDVVKVNTDLIKTLEQGGYLPVIAPVGVGLAGESYNINADVVAGRVAAALNAEKLILLTDTPGVLDKDKQLIQKISVAQMHRLIEDESITGGMIPKVVCCAEALNDGVKKAHIIDGRMEHSVLLEIFTDVGIGTEITK.

Residues 64–65, R86, and N190 each bind substrate; that span reads GG.

The protein belongs to the acetylglutamate kinase family. ArgB subfamily.

The protein resides in the cytoplasm. It catalyses the reaction N-acetyl-L-glutamate + ATP = N-acetyl-L-glutamyl 5-phosphate + ADP. It functions in the pathway amino-acid biosynthesis; L-arginine biosynthesis; N(2)-acetyl-L-ornithine from L-glutamate: step 2/4. Catalyzes the ATP-dependent phosphorylation of N-acetyl-L-glutamate. In Trichlorobacter lovleyi (strain ATCC BAA-1151 / DSM 17278 / SZ) (Geobacter lovleyi), this protein is Acetylglutamate kinase.